Reading from the N-terminus, the 429-residue chain is Apolipoprotein A-IV (429 aa).

The N-terminal stretch at 1–20 (MFLKAVVLTLALVAVTGARA) is a signal peptide. 13 tandem repeats follow at residues 33–54 (DYFS…KSEL), 60–81 (ALFQ…KKLV), 82–103 (PFAT…EEIR), 115–136 (PHAN…QRLE), 137–158 (PYTD…RQLT), 159–180 (PYAQ…TSLR), 181–202 (PHAD…ERLT), 203–224 (PYAD…RSLA), 225–246 (PYAQ…FQMK), 247–268 (KNAE…QRLA), 269–286 (PLAE…EGLQ), 287–308 (KSLA…LRVE), and 309–330 (PYGE…QKLG). Residues 33–330 (DYFSQLSSNA…QMEQLRQKLG (298 aa)) form a 13 X 22 AA approximate tandem repeats region. The tract at residues 359–429 (KEKESQDNTL…QVQMLAPLES (71 aa)) is disordered. The span at 381–420 (QEQQQEQEQEQQQQQEQQQQQEQQREQQQQEQQQEQQQEQ) shows a compositional bias: low complexity.

It belongs to the apolipoprotein A1/A4/E family. Homodimer. In terms of processing, phosphorylation sites are present in the extracellular medium. Secreted in plasma.

Its subcellular location is the secreted. In terms of biological role, may have a role in chylomicrons and VLDL secretion and catabolism. Required for efficient activation of lipoprotein lipase by ApoC-II; potent activator of LCAT. Apoa-IV is a major component of HDL and chylomicrons. In Macaca fascicularis (Crab-eating macaque), this protein is Apolipoprotein A-IV (APOA4).